Reading from the N-terminus, the 139-residue chain is Large ribosomal subunit protein uL16c (139 aa).

Basic residues predominate over residues 1–17; the sequence is MLSPKKTKFRKQHRGRM. The interval 1–23 is disordered; sequence MLSPKKTKFRKQHRGRMKGSASK.

It belongs to the universal ribosomal protein uL16 family. Part of the 50S ribosomal subunit.

The protein localises to the plastid. It is found in the chloroplast. This chain is Large ribosomal subunit protein uL16c, found in Pyropia yezoensis (Susabi-nori).